The chain runs to 132 residues: Small ribosomal subunit protein uS8 (132 aa).

The protein belongs to the universal ribosomal protein uS8 family. In terms of assembly, part of the 30S ribosomal subunit. Contacts proteins S5 and S12.

Its function is as follows. One of the primary rRNA binding proteins, it binds directly to 16S rRNA central domain where it helps coordinate assembly of the platform of the 30S subunit. This is Small ribosomal subunit protein uS8 from Geotalea daltonii (strain DSM 22248 / JCM 15807 / FRC-32) (Geobacter daltonii).